The following is a 420-amino-acid chain: MDSIPLSTLFIILIICLVLSAYFSGSETGLLSLNKYRLRFLSEQGNKGAKKAEKLLEKPDTLLSFILIFNNLVNISASAIATVIGMRLYGDAGVAIATGLLTFVMLVFSEIFPKTVAAMHAEKVSFFSSHILTSLLKIFYPLVWLMNIFTKSLMQIVGLKLDMQKQVISSEELRSIVSEAGEATPNEQHPQMLLSILDMETVTVDDIMVPRNEIGGINIDDDWRAIMRQLNHAAHNRVVLYKGSLDEQVLGILRVREAFRLLLEKNEFTKETLIRAADEVYFIPESTPLKTQLANFRTNKERIGLVVDEYGDIKGLVTLEDILEEIVGDFTTSTAPSIDKEVIQQSDGSMIIDGSANLRDLNKMFNWELDTEDARTFNGLILEHLEEIPDEGTICEIDGLLITILEVGDNMIKQAKVVKL.

The CNNM transmembrane domain occupies 2–190 (DSIPLSTLFI…GEATPNEQHP (189 aa)). Helical transmembrane passes span 3 to 23 (SIPLSTLFIILIICLVLSAYF), 65 to 85 (FILIFNNLVNISASAIATVIG), 92 to 112 (AGVAIATGLLTFVMLVFSEIF), and 126 to 146 (FFSSHILTSLLKIFYPLVWLM). 2 consecutive CBS domains span residues 208–268 (MVPR…KNEF) and 273–333 (LIRA…FTTS).

The protein belongs to the UPF0053 family.

The protein resides in the cell membrane. The polypeptide is UPF0053 protein HI_0107 (Haemophilus influenzae (strain ATCC 51907 / DSM 11121 / KW20 / Rd)).